A 285-amino-acid polypeptide reads, in one-letter code: Energy-coupling factor transporter ATP-binding protein EcfA2 (285 aa).

The ABC transporter domain occupies 3-245 (INFEQVNFSY…DLVWFKTVAL (243 aa)). Position 40 to 47 (40 to 47 (GQTGSGKS)) interacts with ATP. The Proton acceptor role is filled by Glu-171.

This sequence belongs to the ABC transporter superfamily. Energy-coupling factor EcfA family. In terms of assembly, forms a stable energy-coupling factor (ECF) transporter complex probably composed of 2 membrane-embedded substrate-binding proteins (S component), 2 ATP-binding proteins (A component) and 2 transmembrane proteins (T component). This complex interacts with a number of substrate-specific components, including FolT, PanT and RibU for 5-formyltetrahydrofolate, pantothenate and riboflavin respectively.

The protein localises to the cell membrane. Its function is as follows. ATP-binding (A) component of a common energy-coupling factor (ECF) ABC-transporter complex. Unlike classic ABC transporters this ECF transporter provides the energy necessary to transport a number of different substrates including 5-formyltetrahydrofolate, pantothenate and riboflavin. Expression of the complex plus FolT in E.coli allows 5-formyltetrahydrofolate uptake; 5-formyltetrahydrofolate is not taken up in the absence of FolT or the EcfA1A2T complex. The chain is Energy-coupling factor transporter ATP-binding protein EcfA2 from Leuconostoc mesenteroides subsp. mesenteroides (strain ATCC 8293 / DSM 20343 / BCRC 11652 / CCM 1803 / JCM 6124 / NCDO 523 / NBRC 100496 / NCIMB 8023 / NCTC 12954 / NRRL B-1118 / 37Y).